Reading from the N-terminus, the 93-residue chain is Acylphosphatase (93 aa).

The 87-residue stretch at 5 to 91 (RAHFLVKGFV…RGETTFRIRS (87 aa)) folds into the Acylphosphatase-like domain. Residues Arg-20 and Asn-38 contribute to the active site.

This sequence belongs to the acylphosphatase family.

The enzyme catalyses an acyl phosphate + H2O = a carboxylate + phosphate + H(+). The sequence is that of Acylphosphatase (acyP) from Moorella thermoacetica (strain ATCC 39073 / JCM 9320).